The chain runs to 1317 residues: DNA-directed RNA polymerase subunit beta' (1317 aa).

Zn(2+)-binding residues include Cys60, Cys62, Cys75, and Cys78. Residues Asp535, Asp537, and Asp539 each contribute to the Mg(2+) site. 4 residues coordinate Zn(2+): Cys890, Cys967, Cys974, and Cys977.

This sequence belongs to the RNA polymerase beta' chain family. In terms of assembly, the RNAP catalytic core consists of 2 alpha, 1 beta, 1 beta' and 1 omega subunit. When a sigma factor is associated with the core the holoenzyme is formed, which can initiate transcription. Mg(2+) is required as a cofactor. Zn(2+) serves as cofactor.

It catalyses the reaction RNA(n) + a ribonucleoside 5'-triphosphate = RNA(n+1) + diphosphate. In terms of biological role, DNA-dependent RNA polymerase catalyzes the transcription of DNA into RNA using the four ribonucleoside triphosphates as substrates. This is DNA-directed RNA polymerase subunit beta' from Mycolicibacterium smegmatis (strain ATCC 700084 / mc(2)155) (Mycobacterium smegmatis).